The following is a 475-amino-acid chain: Fez family zinc finger protein 1 (475 aa).

An Engrailed homology 1 repressor motif is present at residues 28–43 (PLAFSIERIMARTPEP). C2H2-type zinc fingers lie at residues 260 to 282 (FTCE…MPVH), 288 to 310 (FVCK…KIIH), 316 to 338 (HKCN…TRIH), 344 to 366 (FVCE…KLTH), 372 to 394 (FKCN…MHTH), and 400 to 423 (FTCP…RKLH). Positions 425–475 (SSLGLTRTPTGEPSSDPPPQLQQPPPAPLPPLQPTLPPPGPLPSGLHQGHQ) are disordered. Polar residues predominate over residues 427 to 437 (LGLTRTPTGEP). The segment covering 439-466 (SDPPPQLQQPPPAPLPPLQPTLPPPGPL) has biased composition (pro residues).

It belongs to the krueppel C2H2-type zinc-finger protein family.

Its subcellular location is the nucleus. Transcription repressor. Involved in the axonal projection and proper termination of olfactory sensory neurons (OSN). Plays a role in rostro-caudal patterning of the diencephalon and in prethalamic formation. Expression is required in OSN to cell-autonomously regulate OSN axon projections. Regulates non-cell-autonomously the layer formation of the olfactory bulb development and the interneurons. May be required for correct rostral migration of the interneuron progenitors. The sequence is that of Fez family zinc finger protein 1 (Fezf1) from Mus musculus (Mouse).